A 396-amino-acid chain; its full sequence is Acetate kinase (396 aa).

Asn7 contributes to the Mg(2+) binding site. Lys14 is an ATP binding site. Arg88 is a substrate binding site. The active-site Proton donor/acceptor is Asp145. Residues 205 to 209, 279 to 281, and 327 to 331 each bind ATP; these read HLGNG, DFR, and GIGEN. Mg(2+) is bound at residue Glu381.

It belongs to the acetokinase family. In terms of assembly, homodimer. The cofactor is Mg(2+). Requires Mn(2+) as cofactor.

The protein resides in the cytoplasm. It catalyses the reaction acetate + ATP = acetyl phosphate + ADP. It participates in metabolic intermediate biosynthesis; acetyl-CoA biosynthesis; acetyl-CoA from acetate: step 1/2. Catalyzes the formation of acetyl phosphate from acetate and ATP. Can also catalyze the reverse reaction. In Campylobacter jejuni subsp. jejuni serotype O:23/36 (strain 81-176), this protein is Acetate kinase.